Reading from the N-terminus, the 917-residue chain is Serine/arginine repetitive matrix protein 1 (917 aa).

Met1 bears the N-acetylmethionine mark. The segment at 1 to 151 is necessary for DNA and RNA-binding; sequence MDAGFFRGTS…ASMKKQDEDK (151 aa). The tract at residues 1–156 is necessary for mRNA 3'-end cleavage and cytoplasmic accumulation; that stretch reads MDAGFFRGTS…QDEDKDKRDK (156 aa). Arg7 carries the citrulline modification. The 100-residue stretch at 27 to 126 folds into the PWI domain; that stretch reads QLKFAECLEK…AGIPSAFLEL (100 aa). A Glycyl lysine isopeptide (Lys-Gly) (interchain with G-Cter in SUMO2) cross-link involves residue Lys127. Residues 139–170 show a composition bias toward basic and acidic residues; that stretch reads EKLASMKKQDEDKDKRDKEEKESSREKRERSR. The disordered stretch occupies residues 139–917; that stretch reads EKLASMKKQD…MRKAQVSPQS (779 aa). N6-acetyllysine is present on Lys140. Residues 171 to 207 are compositionally biased toward basic residues; it reads SPRRRKSRSPSPRRRSSPVRRERKRSHSRSPRHRTKS. Residues 214-234 are compositionally biased toward basic and acidic residues; it reads PEKKEKTPELPEPSVKVKEPS. A Phosphothreonine modification is found at Thr220. Phosphoserine is present on Ser227. A Glycyl lysine isopeptide (Lys-Gly) (interchain with G-Cter in SUMO1); alternate cross-link involves residue Lys231. A Glycyl lysine isopeptide (Lys-Gly) (interchain with G-Cter in SUMO2); alternate cross-link involves residue Lys231. A phosphoserine mark is found at Ser234 and Ser240. Position 241 is a phosphothreonine (Thr241). A compositionally biased stretch (basic and acidic residues) spans 246–275; sequence KVPKPEPIPEPKEPSPEKNSKKEKEKEKTR. A Glycyl lysine isopeptide (Lys-Gly) (interchain with G-Cter in SUMO2) cross-link involves residue Lys249. A Phosphoserine modification is found at Ser260. 2 stretches are compositionally biased toward basic residues: residues 276–329 and 336–351; these read PRSR…RTPP and PRHR…RRRS. Residues 300-702 form a necessary for speckles and matrix localization region; sequence RRHRSRSRSY…NKRHSPSPRP (403 aa). Residues 352 to 368 show a composition bias toward low complexity; the sequence is SASLSGSSSSSSSSRSR. Residues Ser389, Ser391, Ser393, and Ser402 each carry the phosphoserine modification. Thr406 is subject to Phosphothreonine. Ser414 is subject to Phosphoserine. Thr416 bears the Phosphothreonine mark. Phosphoserine is present on residues Ser420, Ser429, Ser431, and Ser436. A compositionally biased stretch (polar residues) spans 428–438; it reads VSVSPGRTSGK. Lys447 participates in a covalent cross-link: Glycyl lysine isopeptide (Lys-Gly) (interchain with G-Cter in SUMO2). A phosphoserine mark is found at Ser450 and Ser452. Residue Lys459 forms a Glycyl lysine isopeptide (Lys-Gly) (interchain with G-Cter in SUMO2) linkage. 2 positions are modified to phosphoserine: Ser463 and Ser465. Residue Lys472 forms a Glycyl lysine isopeptide (Lys-Gly) (interchain with G-Cter in SUMO2) linkage. Ser478 carries the post-translational modification Phosphoserine. The span at 478 to 501 shows a compositional bias: low complexity; it reads SVQQRRQYRRQNQQSSSDSGSSSS. The segment covering 503-518 has biased composition (basic and acidic residues); the sequence is EDERPKRSHVKNGEVG. Phosphoserine occurs at positions 524, 526, 528, 530, 532, 563, and 565. Residues 557 to 574 are compositionally biased toward basic residues; it reads SGRRRRSPSPPPTRRRRS. Thr569 carries the post-translational modification Phosphothreonine. Ser574 and Ser576 each carry phosphoserine. A compositionally biased stretch (basic residues) spans 581-606; the sequence is PRRRRTPTPPPRRRTPSPPPRRRSPS. Residues Thr586, Thr588, and Thr595 each carry the phosphothreonine modification. Position 597 is a phosphoserine (Ser597). Over residues 607 to 619 the composition is skewed to low complexity; it reads PRRYSPPIQRRYS. Tyr610 is subject to Phosphotyrosine. Phosphoserine is present on residues Ser611, Ser619, and Ser621. Thr628 carries the post-translational modification Phosphothreonine. 5 positions are modified to phosphoserine: Ser630, Ser640, Ser642, Ser650, and Ser652. Over residues 635 to 650 the composition is skewed to basic residues; sequence PKRRASPSPPPKRRVS. The span at 663–677 shows a compositional bias: basic residues; sequence TKRRSPSLSSKHRKG. Positions 699–713 are enriched in pro residues; it reads SPRPRAPQTSSPPPV. 6 positions are modified to phosphoserine: Ser708, Ser709, Ser718, Ser720, Ser726, and Ser728. 3 stretches are compositionally biased toward low complexity: residues 714–732, 749–772, and 782–799; these read RRGA…PSTR, AASP…SPEP, and SPVQ…AVPV. Thr731 is subject to Phosphothreonine. Phosphoserine occurs at positions 751, 753, 761, 765, 767, 769, 782, 786, 788, and 790. Phosphothreonine is present on Thr791. A phosphoserine mark is found at Ser794 and Ser804. Thr806 is modified (phosphothreonine). Phosphoserine is present on residues Ser808, Ser810, and Ser815. A compositionally biased stretch (basic residues) spans 822 to 847; it reads KKKKKKKDKKHKKDKKHKKHKKHKKE. Positions 850 to 879 are enriched in low complexity; it reads VAAAAAAAVTPAAIAAATTTLAQEEPVAAP. A Glycyl lysine isopeptide (Lys-Gly) (interchain with G-Cter in SUMO2) cross-link involves residue Lys882. Thr885 is subject to Phosphothreonine. Residue Ser887 is modified to Phosphoserine. The segment covering 895-905 has biased composition (basic and acidic residues); sequence DLEKHLREKAL. Ser914 is modified (phosphoserine).

Belongs to the splicing factor SR family. Identified in the spliceosome C complex. Found in a pre-mRNA splicing complex with SFRS4, SFRS5, SNRP70, SNRPA1, SRRM1 and SRRM2. Component of the minor spliceosome, which splices U12-type introns. Found in a pre-mRNA exonic splicing enhancer (ESE) complex with SNRP70, SNRPA1, SRRM1 and TRA2B/SFRS10. Found in a mRNA splicing-dependent exon junction complex (EJC) with DEK, PRPF8, NCBP1, RBM8A, RNPS1, SRRM1 and ALYREF/THOC4. Interacts with DDX39B, CPSF1, RBM8A, RNPS1, and ALYREF/THOC4. Seems to be a compound of RNA export complexes that are released from speckles in a ATP-dependent manner. In terms of processing, phosphorylated on multiple serine and threonine residues by DYRK3 during the G2-to-M transition, after the nuclear-envelope breakdown. Phosphorylation by DYRK3 promotes disassembly of nuclear speckles. Post-translationally, citrullinated by PADI4.

Functionally, part of pre- and post-splicing multiprotein mRNP complexes. As a component of the minor spliceosome, involved in the splicing of U12-type introns in pre-mRNAs. Involved in numerous pre-mRNA processing events. Promotes constitutive and exonic splicing enhancer (ESE)-dependent splicing activation by bridging together sequence-specific (SR family proteins, SFRS4, SFRS5 and TRA2B/SFRS10) and basal snRNP (SNRP70 and SNRPA1) factors of the spliceosome. Stimulates mRNA 3'-end cleavage independently of the formation of an exon junction complex. Binds both pre-mRNA and spliced mRNA 20-25 nt upstream of exon-exon junctions. Binds RNA and DNA with low sequence specificity and has similar preference for either double- or single-stranded nucleic acid substrates. The polypeptide is Serine/arginine repetitive matrix protein 1 (SRRM1) (Pongo abelii (Sumatran orangutan)).